A 163-amino-acid chain; its full sequence is Nucleotide-binding protein GK0742 (163 aa).

The protein belongs to the YajQ family.

Functionally, nucleotide-binding protein. The sequence is that of Nucleotide-binding protein GK0742 from Geobacillus kaustophilus (strain HTA426).